A 445-amino-acid chain; its full sequence is Chromosomal replication initiator protein DnaA (445 aa).

Positions 1–73 (MSPNSTLWQT…NELATKYSST (73 aa)) are domain I, interacts with DnaA modulators. The interval 73–102 (TPVRLKFVSQEEVIEEPVADRKLTIDYRQG) is domain II. Positions 103–323 (NLNSTYTFDS…GALIRLISYA (221 aa)) are domain III, AAA+ region. The ATP site is built by glycine 147, glycine 149, lysine 150, and threonine 151. Positions 324-445 (QTFNLEITMN…KFAVDSIVKK (122 aa)) are domain IV, binds dsDNA.

Belongs to the DnaA family. In terms of assembly, oligomerizes as a right-handed, spiral filament on DNA at oriC.

It localises to the cytoplasm. Functionally, plays an essential role in the initiation and regulation of chromosomal replication. ATP-DnaA binds to the origin of replication (oriC) to initiate formation of the DNA replication initiation complex once per cell cycle. Binds the DnaA box (a 9 base pair repeat at the origin) and separates the double-stranded (ds)DNA. Forms a right-handed helical filament on oriC DNA; dsDNA binds to the exterior of the filament while single-stranded (ss)DNA is stabiized in the filament's interior. The ATP-DnaA-oriC complex binds and stabilizes one strand of the AT-rich DNA unwinding element (DUE), permitting loading of DNA polymerase. After initiation quickly degrades to an ADP-DnaA complex that is not apt for DNA replication. Binds acidic phospholipids. This chain is Chromosomal replication initiator protein DnaA, found in Acholeplasma laidlawii.